A 364-amino-acid chain; its full sequence is Protein Bop (364 aa).

The segment at 66–88 (STASGTCGGKPAERGPLAGHMPS) is disordered. A BH3 motif is present at residues 114-128 (LDRFLAQLGDYMSFH). The interval 258–364 (QLTKESTPGP…PGEPPLSPGF (107 aa)) is disordered. 2 stretches are compositionally biased toward pro residues: residues 311-322 (AQRPDPAHPGGP) and 355-364 (PGEPPLSPGF).

As to quaternary structure, interacts (via BH3 domain) with VDAC1. Interacts with pro-survival Bcl-2 family members, BCL2, BCL2L1 isoform Bcl-X(L), MCL1, BCL2A1 and BCL2L2. Interacts with BAX and BAK1. As to expression, ubiquitously expressed.

The protein localises to the mitochondrion. Its function is as follows. Could induce apoptosis in a BH3 domain-dependent manner. The direct interaction network of Bcl-2 family members may play a key role in modulation RTL10/BOP intrinsic apoptotic signaling activity. This is Protein Bop from Homo sapiens (Human).